A 77-amino-acid polypeptide reads, in one-letter code: NAD(P)H-quinone oxidoreductase subunit L (77 aa).

The next 2 membrane-spanning stretches (helical) occupy residues 12–32 and 47–67; these read LIAY…LLFY and LGIY…SPFL.

Belongs to the complex I NdhL subunit family. In terms of assembly, NDH-1 can be composed of about 15 different subunits; different subcomplexes with different compositions have been identified which probably have different functions.

The protein localises to the cellular thylakoid membrane. The enzyme catalyses a plastoquinone + NADH + (n+1) H(+)(in) = a plastoquinol + NAD(+) + n H(+)(out). It catalyses the reaction a plastoquinone + NADPH + (n+1) H(+)(in) = a plastoquinol + NADP(+) + n H(+)(out). Functionally, NDH-1 shuttles electrons from an unknown electron donor, via FMN and iron-sulfur (Fe-S) centers, to quinones in the respiratory and/or the photosynthetic chain. The immediate electron acceptor for the enzyme in this species is believed to be plastoquinone. Couples the redox reaction to proton translocation, and thus conserves the redox energy in a proton gradient. Cyanobacterial NDH-1 also plays a role in inorganic carbon-concentration. In Prochlorococcus marinus (strain MIT 9312), this protein is NAD(P)H-quinone oxidoreductase subunit L.